A 352-amino-acid polypeptide reads, in one-letter code: Mitochondrial ubiquitin ligase activator of NFKB 1 (352 aa).

Topologically, residues 1–8 (MESGGRPS) are cytoplasmic. A helical transmembrane segment spans residues 9–29 (LCQFILLGTTSVVTAALYSVY). At 30–238 (RQKARVSQEL…LLQRQESSVR (209 aa)) the chain is on the mitochondrial intermembrane side. Lysine 52 is covalently cross-linked (Glycyl lysine isopeptide (Lys-Gly) (interchain with G-Cter in ubiquitin)). A helical transmembrane segment spans residues 239–259 (LWKVLALVFGFATCATLFFIL). Topologically, residues 260–352 (RKQYLQRQER…ITRVIPLYNS (93 aa)) are cytoplasmic. Glycyl lysine isopeptide (Lys-Gly) (interchain with G-Cter in ubiquitin) cross-links involve residues lysine 273 and lysine 299. The segment at 302–340 (CVVCLSSFKSCVFLECGHVCSCTECYRALPEPKKCPICR) adopts an RING-type zinc-finger fold.

In terms of assembly, homooligomer. Interacts with MAP3K7/TAK1. Interacts with UBC9. Interacts with and sumoylates DNM1L. Interacts with MAVS. Interacts with TP53 (via N-terminus); the interaction leads to ubiquitination and proteasomal degradation of TP53. Post-translationally, ubiquitinated by PRKN during mitophagy, leading to its degradation and enhancement of mitophagy. Deubiquitinated by USP30. In terms of tissue distribution, widely expressed with highest levels in the heart, skeletal muscle, placenta, kidney and liver. Barely detectable in colon and thymus.

The protein localises to the mitochondrion outer membrane. It localises to the peroxisome. The catalysed reaction is S-ubiquitinyl-[E2 ubiquitin-conjugating enzyme]-L-cysteine + [acceptor protein]-L-lysine = [E2 ubiquitin-conjugating enzyme]-L-cysteine + N(6)-ubiquitinyl-[acceptor protein]-L-lysine.. It participates in protein modification; protein ubiquitination. The protein operates within protein modification; protein sumoylation. In terms of biological role, exhibits weak E3 ubiquitin-protein ligase activity. E3 ubiquitin ligases accept ubiquitin from an E2 ubiquitin-conjugating enzyme in the form of a thioester and then directly transfer the ubiquitin to targeted substrates. Can ubiquitinate AKT1 preferentially at 'Lys-284' involving 'Lys-48'-linked polyubiquitination and seems to be involved in regulation of Akt signaling by targeting phosphorylated Akt to proteasomal degradation. Mediates polyubiquitination of cytoplasmic TP53 at 'Lys-24' which targets TP53 for proteasomal degradation, thus reducing TP53 levels in the cytoplasm and mitochondrion. Proposed to preferentially act as a SUMO E3 ligase at physiological concentrations. Plays a role in the control of mitochondrial morphology by promoting mitochondrial fragmentation, and influences mitochondrial localization. Likely to promote mitochondrial fission through negatively regulating the mitochondrial fusion proteins MFN1 and MFN2, acting in a pathway that is parallel to the PRKN/PINK1 regulatory pathway. May also be involved in the sumoylation of the membrane fission protein DNM1L. Inhibits cell growth. When overexpressed, activates JNK through MAP3K7/TAK1 and induces caspase-dependent apoptosis. Involved in the modulation of innate immune defense against viruses by inhibiting RIGI-dependent antiviral response. Can mediate RIGI sumoylation and disrupt its polyubiquitination. This Homo sapiens (Human) protein is Mitochondrial ubiquitin ligase activator of NFKB 1 (MUL1).